The primary structure comprises 281 residues: ATP synthase gamma chain (281 aa).

The protein belongs to the ATPase gamma chain family. In terms of assembly, F-type ATPases have 2 components, CF(1) - the catalytic core - and CF(0) - the membrane proton channel. CF(1) has five subunits: alpha(3), beta(3), gamma(1), delta(1), epsilon(1). CF(0) has three main subunits: a, b and c.

It localises to the cell membrane. In terms of biological role, produces ATP from ADP in the presence of a proton gradient across the membrane. The gamma chain is believed to be important in regulating ATPase activity and the flow of protons through the CF(0) complex. The sequence is that of ATP synthase gamma chain from Mesoplasma florum (strain ATCC 33453 / NBRC 100688 / NCTC 11704 / L1) (Acholeplasma florum).